We begin with the raw amino-acid sequence, 86 residues long: Bacteriocin thailandicin (86 aa).

The segment at residues 23–86 is a cross-link (cyclopeptide (Leu-Trp)); that stretch reads LTANLGISSY…KYGAKYSAAW (64 aa).

The protein localises to the secreted. Functionally, cyclopeptide antibiotic with bacteriolytic activity against the Gram-positive bacteria S.aureus and S.thermophilus, and lower activity against the Gram-negative bacteria E.coli and P.aeruginosa. This is Bacteriocin thailandicin from Enterococcus thailandicus.